Here is a 541-residue protein sequence, read N- to C-terminus: Alpha-zingiberene synthase (541 aa).

Residues D296, D300, D437, T441, and E445 each coordinate Mg(2+). The short motif at 296–300 is the DDXXD motif element; that stretch reads DDIYD.

This sequence belongs to the terpene synthase family. Requires Mg(2+) as cofactor. Mn(2+) serves as cofactor.

It catalyses the reaction (2E,6E)-farnesyl diphosphate = alpha-zingiberene + diphosphate. It functions in the pathway secondary metabolite biosynthesis; terpenoid biosynthesis. Its function is as follows. Sesquiterpene synthase that catalyzes the formation of alpha-zingiberene and other sesquiterpenes from trans,trans-farnesyl diphosphate (FPP). May have an additional monoterpene synthase activity. The chain is Alpha-zingiberene synthase (ZIS) from Ocimum basilicum (Sweet basil).